Reading from the N-terminus, the 336-residue chain is Putative transcription factor avaE (336 aa).

Positions 32-100 (TATRLNQTTF…VPLDQNESMP (69 aa)) form a DNA-binding region, WRKY.

The protein resides in the nucleus. Its pathway is secondary metabolite biosynthesis. In terms of biological role, putative transcription factor; part of the cluster that mediates the biosynthesis of a highly modified cyclo-arginine-tryptophan dipeptide (cRW). The polypeptide is Putative transcription factor avaE (Aspergillus versicolor).